The primary structure comprises 506 residues: Cobyric acid synthase (506 aa).

Residues 251 to 448 (DITIAIVQLP…LHGLFDSDAF (198 aa)) enclose the GATase cobBQ-type domain. The Nucleophile role is filled by C332. H440 is a catalytic residue.

This sequence belongs to the CobB/CobQ family. CobQ subfamily.

It functions in the pathway cofactor biosynthesis; adenosylcobalamin biosynthesis. Its function is as follows. Catalyzes amidations at positions B, D, E, and G on adenosylcobyrinic A,C-diamide. NH(2) groups are provided by glutamine, and one molecule of ATP is hydrogenolyzed for each amidation. The chain is Cobyric acid synthase from Salmonella heidelberg (strain SL476).